The chain runs to 711 residues: Polyribonucleotide nucleotidyltransferase (711 aa).

Mg(2+)-binding residues include Asp-491 and Asp-497. Residues 559 to 618 enclose the KH domain; sequence PRLITIKINPEKIRDVIGKGGAVIRALTEETGTQIDISDEGVVTIASVDAAAGQEAKRRI. An S1 motif domain is found at 628–696; the sequence is GKIYEGTVLK…DRGRLKLSMK (69 aa).

It belongs to the polyribonucleotide nucleotidyltransferase family. The cofactor is Mg(2+).

The protein resides in the cytoplasm. The enzyme catalyses RNA(n+1) + phosphate = RNA(n) + a ribonucleoside 5'-diphosphate. In terms of biological role, involved in mRNA degradation. Catalyzes the phosphorolysis of single-stranded polyribonucleotides processively in the 3'- to 5'-direction. The chain is Polyribonucleotide nucleotidyltransferase from Janthinobacterium sp. (strain Marseille) (Minibacterium massiliensis).